The following is a 37-amino-acid chain: Lambda-hexatoxin-Hf1a (37 aa).

4 cysteine pairs are disulfide-bonded: C4/C18, C11/C23, C14/C15, and C17/C34.

It belongs to the neurotoxin 11 (kappa toxin) family. Expressed by the venom gland.

It localises to the secreted. In terms of biological role, this excitatory toxin inhibits insect calcium-activated potassium (KCa) channels (Slo-type). The chain is Lambda-hexatoxin-Hf1a from Hadronyche formidabilis (Northern tree funnel-web spider).